The following is a 69-amino-acid chain: Parvalbumin beta 3 (69 aa).

N-acetylalanine is present on alanine 1. The region spanning 24–59 is the EF-hand domain; it reads FNYKTFFKFFAIIDQDHSGFIEEEELKLFLQTFSAG. Residues aspartate 37, aspartate 39, serine 41, phenylalanine 43, glutamate 45, and glutamate 48 each coordinate Ca(2+).

This sequence belongs to the parvalbumin family.

In muscle, parvalbumin is thought to be involved in relaxation after contraction. It binds two calcium ions. This is Parvalbumin beta 3 from Merluccius polli (Benguela hake).